Here is a 615-residue protein sequence, read N- to C-terminus: Chaperone protein DnaK (615 aa).

Threonine 175 carries the phosphothreonine; by autocatalysis modification. The tract at residues 573-615 is disordered; it reads SQEMYQKAAQEQQAAQGAEQAQDNGPKDDNVVDADFKEVDEDK. Residues 580 to 594 show a composition bias toward low complexity; sequence AAQEQQAAQGAEQAQ. Positions 597–609 are enriched in basic and acidic residues; the sequence is GPKDDNVVDADFK.

It belongs to the heat shock protein 70 family.

In terms of biological role, acts as a chaperone. In Clostridioides difficile (strain 630) (Peptoclostridium difficile), this protein is Chaperone protein DnaK.